Consider the following 372-residue polypeptide: Glutamate 5-kinase (372 aa).

Lys14 is an ATP binding site. Substrate contacts are provided by Ser54, Asp141, and Asn153. Residues 173–174 and 215–221 each bind ATP; these read TD and TGGMSTK. The 79-residue stretch at 280–358 folds into the PUA domain; the sequence is QGSLVLDAGA…DEIESVLGYD (79 aa).

The protein belongs to the glutamate 5-kinase family.

It is found in the cytoplasm. It carries out the reaction L-glutamate + ATP = L-glutamyl 5-phosphate + ADP. It participates in amino-acid biosynthesis; L-proline biosynthesis; L-glutamate 5-semialdehyde from L-glutamate: step 1/2. In terms of biological role, catalyzes the transfer of a phosphate group to glutamate to form L-glutamate 5-phosphate. The sequence is that of Glutamate 5-kinase from Shewanella oneidensis (strain ATCC 700550 / JCM 31522 / CIP 106686 / LMG 19005 / NCIMB 14063 / MR-1).